A 179-amino-acid polypeptide reads, in one-letter code: Sec-independent protein translocase protein TatB (179 aa).

A helical membrane pass occupies residues 1 to 21 (MFDLGFWEVLIIMLIGLLILG). Basic and acidic residues-rich tracts occupy residues 75 to 86 (KDVEKNARRFEA) and 94 to 106 (TFRD…DDAA). The interval 75-179 (KDVEKNARRF…QGGGGEEKRQ (105 aa)) is disordered.

The protein belongs to the TatB family. As to quaternary structure, the Tat system comprises two distinct complexes: a TatABC complex, containing multiple copies of TatA, TatB and TatC subunits, and a separate TatA complex, containing only TatA subunits. Substrates initially bind to the TatABC complex, which probably triggers association of the separate TatA complex to form the active translocon.

Its subcellular location is the cell inner membrane. Part of the twin-arginine translocation (Tat) system that transports large folded proteins containing a characteristic twin-arginine motif in their signal peptide across membranes. Together with TatC, TatB is part of a receptor directly interacting with Tat signal peptides. TatB may form an oligomeric binding site that transiently accommodates folded Tat precursor proteins before their translocation. This Alkalilimnicola ehrlichii (strain ATCC BAA-1101 / DSM 17681 / MLHE-1) protein is Sec-independent protein translocase protein TatB.